Consider the following 2211-residue polypeptide: Nonribosomal peptide synthetase 13 (2211 aa).

The adenylation 1 stretch occupies residues 76–475 (TYAELDSLSD…IEHHLQLTLP (400 aa)). Residues 594 to 671 (PPSTPKEATI…EQSKRAGLIQ (78 aa)) enclose the Carrier 1 domain. S631 carries the O-(pantetheine 4'-phosphoryl)serine modification. The interval 710-975 (EDIYPCTALQ…IATVPTRIRV (266 aa)) is condensation 1. The interval 1169–1563 (TYRELWAHSS…LGAVEASVMR (395 aa)) is adenylation 2. In terms of domain architecture, Carrier 2 spans 1677–1756 (PMSDDNERRL…RSRHLITEQA (80 aa)). S1714 bears the O-(pantetheine 4'-phosphoryl)serine mark. Positions 1814–2069 (HFQFDLSGAV…CTNYIPYRLS (256 aa)) are condensation 2.

This sequence belongs to the NRP synthetase family.

It carries out the reaction L-proline + L-tryptophan + 2 ATP = brevianamide F + 2 AMP + 2 diphosphate + 2 H(+). The protein operates within mycotoxin biosynthesis. In terms of biological role, nonribosomal peptide synthetase; part of the gene cluster that mediates the biosynthesis of fumitremorgins, indole alkaloids that carry not only intriguing chemical structures, but also interesting biological and pharmacological activities. The biosynthesis of fumitremorgin-type alkaloids begins by condensation of the two amino acids L-tryptophan and L-proline to brevianamide F, catalyzed by the non-ribosomal peptide synthetase ftmA. Brevianamide F is then prenylated by the prenyltransferase ftmPT1/ftmB in the presence of dimethylallyl diphosphate, resulting in the formation of tryprostatin B. The three cytochrome P450 monooxygenases, ftmP450-1/ftmC, ftmP450-2/ftmE and ftmP450-3/FtmG, are responsible for the conversion of tryprostatin B to 6-hydroxytryprostatin B, tryprostatin A to fumitremorgin C and fumitremorgin C to 12,13-dihydroxyfumitremorgin C, respectively. The putative methyltransferase ftmMT/ftmD is expected for the conversion of 6-hydroxytryprostatin B to tryprostatin A. FtmPT2/FtmH catalyzes the prenylation of 12,13-dihydroxyfumitre-morgin C in the presence of dimethylallyl diphosphate, resulting in the formation of fumitremorgin B. Fumitremorgin B is further converted to verruculogen by ftmOx1/ftmF via the insertion of an endoperoxide bond between the two prenyl moieties. In some fungal species, verruculogen is further converted to fumitremorgin A, but the enzymes involved in this step have not been identified yet. The protein is Nonribosomal peptide synthetase 13 of Aspergillus fumigatus (Neosartorya fumigata).